The chain runs to 1976 residues: Putative callose synthase 8 (1976 aa).

Topologically, residues 1–530 (MSHEIVPVDP…FWQIFRSFDR (530 aa)) are cytoplasmic. The helical transmembrane segment at 531–551 (MWSFFVLSLQALIIMACHDVG) threads the bilayer. The Extracellular portion of the chain corresponds to 552–565 (SPLQVFNANIFEDV). A helical membrane pass occupies residues 566 to 586 (MSIFITSAILKLIKGILDIIF). The Cytoplasmic portion of the chain corresponds to 587 to 602 (KWKARNTMPINEKKKR). A helical transmembrane segment spans residues 603 to 623 (LVKLGFAAMWTIILPVLYSHS). The Extracellular segment spans residues 624–648 (RRKYICYFTNYKTWLGEWCFSPYMV). A helical membrane pass occupies residues 649 to 669 (AVTIYLTGSAIELVLFFVPAI). The Cytoplasmic portion of the chain corresponds to 670–707 (SKYIETSNHGIFKTLSWWGQPRLYVGRGMQETQVSQFK). Residues 708–728 (YTFFWILVLLTKFAFSYAFEI) traverse the membrane as a helical segment. Residues 729–759 (KPLIEPTRLIMKVGVRNYEWHEIFPEVKSNA) are Extracellular-facing. The chain crosses the membrane as a helical span at residues 760-780 (AAIVAVWAPIMVVYFMDTQIW). The Cytoplasmic portion of the chain corresponds to 781–1544 (YSVYCTIFGG…FDFFRMLSCY (764 aa)). The chain crosses the membrane as a helical span at residues 1545-1565 (FTTIGFYFSSLISVIGIYIYL). Residues 1566 to 1595 (YGQLYLVLSGLQKTLILEAKVKNIKSLETA) lie on the Extracellular side of the membrane. A helical transmembrane segment spans residues 1596–1616 (LASQSFIQLGLLTGLPMVMEI). The Cytoplasmic segment spans residues 1617–1620 (GLEK). Residues 1621 to 1641 (GFLIAFQDFILMQLQLAAFFF) form a helical membrane-spanning segment. Topologically, residues 1642-1688 (TFSLGTKTHYFGRTILHGGAKYRPTGRKVVVFHANFSENYRLYSRSH) are extracellular. N-linked (GlcNAc...) asparagine glycosylation occurs at N1676. A helical transmembrane segment spans residues 1689–1709 (FIKGFELMILLVVYELFKHTS). Residues 1710–1715 (QSNMAY) lie on the Cytoplasmic side of the membrane. The helical transmembrane segment at 1716–1736 (SFITFSVWFMSFTWLCAPFLF) threads the bilayer. Residues 1737 to 1790 (NPSGFTWEIIVGDWRDWNRWIKEQGGIGIQQDKSWQSWWNDEQAHLRGSGVGAR) are Extracellular-facing. Residues 1791-1811 (CLEIILSLRFFVYQYGLVYHL) traverse the membrane as a helical segment. The Cytoplasmic portion of the chain corresponds to 1812 to 1819 (DITQSNTN). The chain crosses the membrane as a helical span at residues 1820-1840 (IIVYALSWVVILATFFTVKAV). Topologically, residues 1841–1856 (DLGRQLFSTRKHLVFR) are extracellular. Residues 1857 to 1877 (FFKVFVFVSILTIIITLANIC) traverse the membrane as a helical segment. At 1878-1884 (HLSVKDL) the chain is on the cytoplasmic side. The helical transmembrane segment at 1885–1905 (LVSCLAFLPTGWGLILIAQAV) threads the bilayer. Topologically, residues 1906–1928 (RPKIEGTSLWEFTQVLARAYDYG) are extracellular. A helical membrane pass occupies residues 1929 to 1949 (MGVVLFAPMAILAWLPIISAF). Topologically, residues 1950–1976 (QTRFLFNEAFNRRLQIQPILAGKKKNR) are cytoplasmic.

It belongs to the glycosyltransferase 48 family.

It is found in the cell membrane. The catalysed reaction is [(1-&gt;3)-beta-D-glucosyl](n) + UDP-alpha-D-glucose = [(1-&gt;3)-beta-D-glucosyl](n+1) + UDP + H(+). Involved in callose synthesis at the forming cell plate during cytokinesis. During plant growth and development, callose is found as a transitory component of the cell plate in dividing cells, is a major component of pollen mother cell walls and pollen tubes, and is found as a structural component of plasmodesmatal canals. The polypeptide is Putative callose synthase 8 (CALS8) (Arabidopsis thaliana (Mouse-ear cress)).